The primary structure comprises 300 residues: GTPase Era (300 aa).

The Era-type G domain maps to 8-176 (RCGYVAIVGR…EAQIAKHLPE (169 aa)). Residues 16–23 (GRPNVGKS) form a G1 region. 16 to 23 (GRPNVGKS) serves as a coordination point for GTP. The G2 stretch occupies residues 42–46 (QTTRH). Positions 63 to 66 (DTPG) are G3. GTP is bound by residues 63–67 (DTPGM) and 125–128 (NKTD). Positions 125–128 (NKTD) are G4. Positions 155–157 (ISA) are G5. Positions 199–283 (VREKIMRQLG…MLNLWVKVKG (85 aa)) constitute a KH type-2 domain.

Belongs to the TRAFAC class TrmE-Era-EngA-EngB-Septin-like GTPase superfamily. Era GTPase family. As to quaternary structure, monomer.

It is found in the cytoplasm. The protein localises to the cell inner membrane. Functionally, an essential GTPase that binds both GDP and GTP, with rapid nucleotide exchange. Plays a role in 16S rRNA processing and 30S ribosomal subunit biogenesis and possibly also in cell cycle regulation and energy metabolism. This Pseudomonas putida (strain ATCC 700007 / DSM 6899 / JCM 31910 / BCRC 17059 / LMG 24140 / F1) protein is GTPase Era.